The sequence spans 303 residues: ATP-dependent (S)-NAD(P)H-hydrate dehydratase (303 aa).

In terms of domain architecture, YjeF C-terminal spans 12-299; sequence QQQLVCSVIP…AEVRTAFSML (288 aa). Residues Gly-106 and 158–164 each bind (6S)-NADPHX; that span reads NAVELDR. Residues 194-198 and 213-222 each bind ATP; these read KGSED and GSPRRCGGQG. Asp-223 serves as a coordination point for (6S)-NADPHX.

Belongs to the NnrD/CARKD family. The cofactor is Mg(2+).

The catalysed reaction is (6S)-NADHX + ATP = ADP + phosphate + NADH + H(+). It carries out the reaction (6S)-NADPHX + ATP = ADP + phosphate + NADPH + H(+). Functionally, catalyzes the dehydration of the S-form of NAD(P)HX at the expense of ATP, which is converted to ADP. Together with NAD(P)HX epimerase, which catalyzes the epimerization of the S- and R-forms, the enzyme allows the repair of both epimers of NAD(P)HX, a damaged form of NAD(P)H that is a result of enzymatic or heat-dependent hydration. This is ATP-dependent (S)-NAD(P)H-hydrate dehydratase from Ixodes scapularis (Black-legged tick).